A 384-amino-acid chain; its full sequence is Probable RNA 3'-terminal phosphate cyclase-like protein (384 aa).

It belongs to the RNA 3'-terminal cyclase family. Type 2 subfamily. As to quaternary structure, part of the small subunit (SSU) processome, composed of more than 70 proteins and the RNA chaperone small nucleolar RNA (snoRNA) U3.

Its subcellular location is the nucleus. It is found in the nucleolus. In terms of biological role, part of the small subunit (SSU) processome, first precursor of the small eukaryotic ribosomal subunit. During the assembly of the SSU processome in the nucleolus, many ribosome biogenesis factors, an RNA chaperone and ribosomal proteins associate with the nascent pre-rRNA and work in concert to generate RNA folding, modifications, rearrangements and cleavage as well as targeted degradation of pre-ribosomal RNA by the RNA exosome. Does not have cyclase activity. This is Probable RNA 3'-terminal phosphate cyclase-like protein (Rtc1) from Drosophila melanogaster (Fruit fly).